Reading from the N-terminus, the 4981-residue chain is Protocadherin Fat 4 (4981 aa).

Residues 1–38 (MDLAPDRATGRPWLPLHTLSVSQLLRVFWLLSLLPGQA) form the signal peptide. At 39–4504 (WVHGAEPRQV…PEEISLPLWA (4466 aa)) the chain is on the extracellular side. 34 consecutive Cadherin domains span residues 43-135 (AEPR…APVF), 136-250 (PDPS…PPVF), 251-353 (GSSH…DPVV), 359-475 (PATS…PPVF), 476-582 (SQQV…KPVF), 584-689 (QPEG…SPVF), 690-793 (YPVQ…PPVF), 794-893 (SQVA…SPHF), 894-996 (LQAI…SPVF), 997-1100 (DQLS…RPLF), 1101-1210 (NSTN…APKF), 1211-1315 (LKDF…TPSF), 1316-1420 (PKST…PPSF), 1421-1529 (PPGD…VPMF), 1529-1629 (FISQ…GPVF), 1630-1740 (TQPK…PPVF), 1741-1841 (PTDM…TPKF), 1842-1944 (SRPV…PPIF), 1945-2051 (SLNS…PPTF), 2051-2154 (FLSP…NPIF), 2155-2259 (AQAL…VPVF), 2260-2364 (ELSP…VPTF), 2365-2466 (ASKA…PPRF), 2467-2567 (QHHP…FPKV), 2568-2669 (RAKE…APIF), 2670-2773 (KEDP…APRF), 2773-2872 (FSQI…APRF), 2873-2983 (SRTS…APQF), 2984-3089 (LKSK…TPEF), 3090-3194 (SQSH…SPVF), 3195-3298 (LSDD…VPRF), 3299-3404 (VSKL…PPIF), 3405-3510 (TLNI…GPML), and 3509-3620 (MLTV…VEIF). Residues N84 and N237 are each glycosylated (N-linked (GlcNAc...) asparagine). N-linked (GlcNAc...) asparagine glycosylation is found at N393, N416, N435, N483, N551, N615, N676, N721, N825, N880, N946, N1085, N1101, N1104, N1225, N1296, N1389, and N1514. N-linked (GlcNAc...) asparagine glycans are attached at residues N1828, N1899, N1967, and N2119. Residues N2387 and N2430 are each glycosylated (N-linked (GlcNAc...) asparagine). 7 N-linked (GlcNAc...) asparagine glycosylation sites follow: N2921, N2937, N3036, N3140, N3217, N3392, and N3477. Residues N3706 and N3758 are each glycosylated (N-linked (GlcNAc...) asparagine). The region spanning 3802–3860 (DHDSCVHGPCQNGGSCLRRLAVSSVLKSRESLPVIIVANEPLQPFLCKCLPGYAGSWCE) is the EGF-like 1 domain. 12 cysteine pairs are disulfide-bonded: C3806–C3817, C3811–C3848, C3850–C3859, C3866–C3877, C3871–C3886, C3888–C3897, C3904–C3915, C3909–C3924, C3926–C3935, C3942–C3953, C3947–C3962, and C3964–C3973. One can recognise an EGF-like 2; calcium-binding domain in the interval 3862–3898 (DIDECLPSPCHSGGTCHNLVGGFSCSCPDGFTGRACE). The region spanning 3900–3936 (DINECLQSPCKNGAICQNFPGSFNCVCKTGYTGKMCE) is the EGF-like 3; calcium-binding domain. Positions 3938–3974 (SVNYCECNPCFNGGSCQSGVDSYYCHCPFGVFGKHCE) constitute an EGF-like 4 domain. One can recognise a Laminin G-like 1 domain in the interval 3975 to 4159 (LNSYGFEELS…LAAQGILDQC (185 aa)). N-linked (GlcNAc...) asparagine glycosylation occurs at N4017. 4 disulfides stabilise this stretch: C4133/C4159, C4166/C4177, C4171/C4186, and C4188/C4197. The 37-residue stretch at 4162-4198 (LEGACTRSPCQHGGTCMDYWSWQQCHCKEGLTGKYCE) folds into the EGF-like 5 domain. Residues 4217-4398 (YHMSQNEKRE…KTDPSVKIGC (182 aa)) enclose the Laminin G-like 2 domain. 2 N-linked (GlcNAc...) asparagine glycosylation sites follow: N4267 and N4312. Disulfide bonds link C4365-C4398, C4430-C4441, C4435-C4451, and C4453-C4462. Positions 4426-4463 (PPGDCASHPCQNGGSCEPGLHSGFTCSCPDSHTGRTCE) constitute an EGF-like 6 domain. A helical transmembrane segment spans residues 4505–4525 (VPAIVGSCATVLALLVLSLIL). The Cytoplasmic segment spans residues 4526–4981 (CNQCRGKKAK…PKDGEAEQYV (456 aa)). Disordered stretches follow at residues 4534–4584 (AKNP…PDII), 4680–4713 (QGLR…STFY), 4752–4856 (RSKS…MEYD), 4869–4911 (KLSQ…AAPG), and 4957–4981 (AAAN…EQYV). The span at 4680-4699 (QGLRTSSLSHSACPTPNPLS) shows a compositional bias: polar residues. Residues 4706 to 4795 (FSKSSTFYRN…GLSIEEVERL (90 aa)) are necessary and sufficient for interaction with MPDZ. Positions 4809–4821 (DHGRSSSEEDCRR) are enriched in basic and acidic residues. S4876 is modified (phosphoserine). Over residues 4971-4981 (VPKDGEAEQYV) the composition is skewed to basic and acidic residues.

In terms of assembly, heterophilic interaction with DCHS1; this interaction affects their respective protein levels. Interacts (via cytoplasmic domain) with MPDZ. Forms a complex with PALS1 and MPDZ. In terms of tissue distribution, widely expressed. Expressed in fetal brain, infant brain, brain tumor and colorectal cancer.

The protein resides in the membrane. Its function is as follows. Cadherins are calcium-dependent cell adhesion proteins. FAT4 plays a role in the maintenance of planar cell polarity as well as in inhibition of YAP1-mediated neuroprogenitor cell proliferation and differentiation. This Homo sapiens (Human) protein is Protocadherin Fat 4 (FAT4).